The following is a 185-amino-acid chain: Ribosome-recycling factor (185 aa).

Positions lysine 140–aspartate 166 are disordered.

The protein belongs to the RRF family.

It is found in the cytoplasm. In terms of biological role, responsible for the release of ribosomes from messenger RNA at the termination of protein biosynthesis. May increase the efficiency of translation by recycling ribosomes from one round of translation to another. This Lactobacillus johnsonii (strain CNCM I-12250 / La1 / NCC 533) protein is Ribosome-recycling factor.